A 458-amino-acid polypeptide reads, in one-letter code: Exodeoxyribonuclease 7 large subunit (458 aa).

It belongs to the XseA family. As to quaternary structure, heterooligomer composed of large and small subunits.

It is found in the cytoplasm. It catalyses the reaction Exonucleolytic cleavage in either 5'- to 3'- or 3'- to 5'-direction to yield nucleoside 5'-phosphates.. Bidirectionally degrades single-stranded DNA into large acid-insoluble oligonucleotides, which are then degraded further into small acid-soluble oligonucleotides. The protein is Exodeoxyribonuclease 7 large subunit of Shouchella clausii (strain KSM-K16) (Alkalihalobacillus clausii).